Reading from the N-terminus, the 298-residue chain is Glyoxalase domain-containing protein 4 (298 aa).

Residues 5-130 (RALHFVFKVK…GGYKFYLQDR (126 aa)) form the VOC 1 domain. At Lys-109 the chain carries N6-succinyllysine. Ser-131 bears the Phosphoserine mark. The 122-residue stretch at 137 to 258 (PVLKVTLAVS…DGHEICFVGD (122 aa)) folds into the VOC 2 domain. Residue Lys-273 is modified to N6-succinyllysine.

The protein belongs to the glyoxalase I family. Interacts with NUDT9.

It localises to the mitochondrion. The chain is Glyoxalase domain-containing protein 4 (Glod4) from Mus musculus (Mouse).